Reading from the N-terminus, the 286-residue chain is ATP phosphoribosyltransferase (286 aa).

Belongs to the ATP phosphoribosyltransferase family. Long subfamily. The cofactor is Mg(2+).

The protein localises to the cytoplasm. The catalysed reaction is 1-(5-phospho-beta-D-ribosyl)-ATP + diphosphate = 5-phospho-alpha-D-ribose 1-diphosphate + ATP. It functions in the pathway amino-acid biosynthesis; L-histidine biosynthesis; L-histidine from 5-phospho-alpha-D-ribose 1-diphosphate: step 1/9. With respect to regulation, feedback inhibited by histidine. Catalyzes the condensation of ATP and 5-phosphoribose 1-diphosphate to form N'-(5'-phosphoribosyl)-ATP (PR-ATP). Has a crucial role in the pathway because the rate of histidine biosynthesis seems to be controlled primarily by regulation of HisG enzymatic activity. This chain is ATP phosphoribosyltransferase, found in Paenarthrobacter aurescens (strain TC1).